Here is a 506-residue protein sequence, read N- to C-terminus: ATP synthase subunit alpha (506 aa).

Basic and acidic residues predominate over residues 119-129 (GPIEYEGKRPI). Residues 119–138 (GPIEYEGKRPIESPAPPIVR) are disordered. Residue 169–176 (GDRQTGKT) coordinates ATP.

This sequence belongs to the ATPase alpha/beta chains family. F-type ATPases have 2 components, CF(1) - the catalytic core - and CF(0) - the membrane proton channel. CF(1) has five subunits: alpha(3), beta(3), gamma(1), delta(1), epsilon(1). CF(0) has three main subunits: a(1), b(2) and c(9-12). The alpha and beta chains form an alternating ring which encloses part of the gamma chain. CF(1) is attached to CF(0) by a central stalk formed by the gamma and epsilon chains, while a peripheral stalk is formed by the delta and b chains.

Its subcellular location is the cell membrane. The enzyme catalyses ATP + H2O + 4 H(+)(in) = ADP + phosphate + 5 H(+)(out). Its function is as follows. Produces ATP from ADP in the presence of a proton gradient across the membrane. The alpha chain is a regulatory subunit. This is ATP synthase subunit alpha from Caldanaerobacter subterraneus subsp. tengcongensis (strain DSM 15242 / JCM 11007 / NBRC 100824 / MB4) (Thermoanaerobacter tengcongensis).